The following is a 454-amino-acid chain: Bifunctional protein GlmU (454 aa).

The pyrophosphorylase stretch occupies residues Met-1–Arg-226. UDP-N-acetyl-alpha-D-glucosamine contacts are provided by residues Leu-8–Gly-11, Lys-22, Gln-73, Gly-78–Thr-79, Tyr-99–Asp-101, Gly-136, Glu-151, Asn-166, and Asn-224. Position 101 (Asp-101) interacts with Mg(2+). A Mg(2+)-binding site is contributed by Asn-224. Residues Met-227 to Gln-247 are linker. Positions Gly-248 to Lys-454 are N-acetyltransferase. Positions 330 and 348 each coordinate UDP-N-acetyl-alpha-D-glucosamine. The active-site Proton acceptor is the His-360. UDP-N-acetyl-alpha-D-glucosamine contacts are provided by Tyr-363 and Asn-374. Residues Ala-377, Asn-383–Tyr-384, Ser-402, Ala-420, and Arg-437 contribute to the acetyl-CoA site.

In the N-terminal section; belongs to the N-acetylglucosamine-1-phosphate uridyltransferase family. The protein in the C-terminal section; belongs to the transferase hexapeptide repeat family. As to quaternary structure, homotrimer. Mg(2+) serves as cofactor.

Its subcellular location is the cytoplasm. It catalyses the reaction alpha-D-glucosamine 1-phosphate + acetyl-CoA = N-acetyl-alpha-D-glucosamine 1-phosphate + CoA + H(+). The enzyme catalyses N-acetyl-alpha-D-glucosamine 1-phosphate + UTP + H(+) = UDP-N-acetyl-alpha-D-glucosamine + diphosphate. It participates in nucleotide-sugar biosynthesis; UDP-N-acetyl-alpha-D-glucosamine biosynthesis; N-acetyl-alpha-D-glucosamine 1-phosphate from alpha-D-glucosamine 6-phosphate (route II): step 2/2. The protein operates within nucleotide-sugar biosynthesis; UDP-N-acetyl-alpha-D-glucosamine biosynthesis; UDP-N-acetyl-alpha-D-glucosamine from N-acetyl-alpha-D-glucosamine 1-phosphate: step 1/1. It functions in the pathway bacterial outer membrane biogenesis; LPS lipid A biosynthesis. Catalyzes the last two sequential reactions in the de novo biosynthetic pathway for UDP-N-acetylglucosamine (UDP-GlcNAc). The C-terminal domain catalyzes the transfer of acetyl group from acetyl coenzyme A to glucosamine-1-phosphate (GlcN-1-P) to produce N-acetylglucosamine-1-phosphate (GlcNAc-1-P), which is converted into UDP-GlcNAc by the transfer of uridine 5-monophosphate (from uridine 5-triphosphate), a reaction catalyzed by the N-terminal domain. This Pseudomonas paraeruginosa (strain DSM 24068 / PA7) (Pseudomonas aeruginosa (strain PA7)) protein is Bifunctional protein GlmU.